A 154-amino-acid polypeptide reads, in one-letter code: Lipoprotein signal peptidase (154 aa).

3 consecutive transmembrane segments (helical) span residues 8–28, 58–78, and 88–108; these read LYLIVSLLVIIADQLLKNYIV, IFSGQMILFYLISIAAIAVVI, and NGLFDTGLALVLGGIIGNFID. Active-site residues include Asp117 and Asp133. A helical transmembrane segment spans residues 131-151; sequence IADSAITVGIILVFIYLIFIS.

Belongs to the peptidase A8 family.

It localises to the cell membrane. It carries out the reaction Release of signal peptides from bacterial membrane prolipoproteins. Hydrolyzes -Xaa-Yaa-Zaa-|-(S,diacylglyceryl)Cys-, in which Xaa is hydrophobic (preferably Leu), and Yaa (Ala or Ser) and Zaa (Gly or Ala) have small, neutral side chains.. It functions in the pathway protein modification; lipoprotein biosynthesis (signal peptide cleavage). In terms of biological role, this protein specifically catalyzes the removal of signal peptides from prolipoproteins. This is Lipoprotein signal peptidase from Lactobacillus johnsonii (strain CNCM I-12250 / La1 / NCC 533).